The chain runs to 421 residues: SH2 domain-containing protein 4A (421 aa).

Ser-117 and Ser-123 each carry phosphoserine. A disordered region spans residues 132 to 271; sequence DLQAMKKTEP…FLQPLGIPPK (140 aa). Basic and acidic residues-rich tracts occupy residues 163–201 and 211–230; these read TRKD…KEDS and KAAD…DYKR. Residue Ser-232 is modified to Phosphoserine. One can recognise an SH2 domain in the interval 315-407; it reads WFHGILTLKK…LGKELLLYPC (93 aa).

In terms of assembly, interacts with ESR1. As to expression, in the kidney, expressed only in the glomerulus. Expressed in T-cells, B-cells, macrophages and dendritic cells (at protein level). In adult, highest levels are found in muscle and lung with lower levels in kidney.

The protein resides in the cytoplasm. Inhibits estrogen-induced cell proliferation by competing with PLCG for binding to ESR1, blocking the effect of estrogen on PLCG and repressing estrogen-induced proliferation. May play a role in T-cell development and function. This Mus musculus (Mouse) protein is SH2 domain-containing protein 4A (Sh2d4a).